A 249-amino-acid polypeptide reads, in one-letter code: Sugar fermentation stimulation protein homolog (249 aa).

It belongs to the SfsA family.

The polypeptide is Sugar fermentation stimulation protein homolog (Prochlorococcus marinus (strain MIT 9515)).